The following is a 360-amino-acid chain: Peptide chain release factor 1 (360 aa).

An N5-methylglutamine modification is found at Gln-235.

The protein belongs to the prokaryotic/mitochondrial release factor family. Methylated by PrmC. Methylation increases the termination efficiency of RF1.

The protein localises to the cytoplasm. In terms of biological role, peptide chain release factor 1 directs the termination of translation in response to the peptide chain termination codons UAG and UAA. This chain is Peptide chain release factor 1, found in Blochmanniella pennsylvanica (strain BPEN).